The following is a 218-amino-acid chain: GTP cyclohydrolase 1 (218 aa).

Residues Cys109, His112, and Cys180 each coordinate Zn(2+).

The protein belongs to the GTP cyclohydrolase I family. Toroid-shaped homodecamer, composed of two pentamers of five dimers.

The catalysed reaction is GTP + H2O = 7,8-dihydroneopterin 3'-triphosphate + formate + H(+). It participates in cofactor biosynthesis; 7,8-dihydroneopterin triphosphate biosynthesis; 7,8-dihydroneopterin triphosphate from GTP: step 1/1. This Mannheimia succiniciproducens (strain KCTC 0769BP / MBEL55E) protein is GTP cyclohydrolase 1.